The following is a 513-amino-acid chain: ATP synthase subunit alpha (513 aa).

Position 169–176 (169–176) interacts with ATP; the sequence is GDRQTGKT.

The protein belongs to the ATPase alpha/beta chains family. In terms of assembly, F-type ATPases have 2 components, CF(1) - the catalytic core - and CF(0) - the membrane proton channel. CF(1) has five subunits: alpha(3), beta(3), gamma(1), delta(1), epsilon(1). CF(0) has three main subunits: a(1), b(2) and c(9-12). The alpha and beta chains form an alternating ring which encloses part of the gamma chain. CF(1) is attached to CF(0) by a central stalk formed by the gamma and epsilon chains, while a peripheral stalk is formed by the delta and b chains.

It is found in the cell inner membrane. The catalysed reaction is ATP + H2O + 4 H(+)(in) = ADP + phosphate + 5 H(+)(out). Functionally, produces ATP from ADP in the presence of a proton gradient across the membrane. The alpha chain is a regulatory subunit. The protein is ATP synthase subunit alpha of Edwardsiella ictaluri (strain 93-146).